An 864-amino-acid chain; its full sequence is Mitochondrial 15S rRNA processing factor CCM1 (864 aa).

The N-terminal 76 residues, 1-76, are a transit peptide targeting the mitochondrion; sequence MYMARCGPKN…REFSNTLKER (76 aa). PPR repeat units follow at residues 319–353 and 356–390; these read NKQN…STKH and DICT…NIKP.

This sequence belongs to the CCM1 family. Binds to mitochondrial small subunit 15S rRNA.

It localises to the mitochondrion. In terms of biological role, regulates mitochondrial small subunit maturation by controlling 15S rRNA 5'-end processing. Localizes to the 5' precursor of the 15S rRNA in a position that is subsequently occupied by mS47 in the mature yeast mtSSU. Uses structure and sequence-specific RNA recognition, binding to a single-stranded region of the precursor and specifically recognizing bases -6 to -1. The exchange of Ccm1 for mS47 is coupled to the irreversible removal of precursor rRNA that is accompanied by conformational changes of the mitoribosomal proteins uS5m and mS26. These conformational changes signal completion of 5'-end rRNA processing through protection of the mature 5'-end of the 15S rRNA and stabilization of mS47. The removal of the 5' precursor together with the dissociation of Ccm1 may be catalyzed by the 5'-3' exoribonuclease Pet127. Involved in the specific removal of group I introns in mitochondrial encoded transcripts. In Saccharomyces cerevisiae (strain RM11-1a) (Baker's yeast), this protein is Mitochondrial 15S rRNA processing factor CCM1 (CCM1).